A 211-amino-acid polypeptide reads, in one-letter code: Holliday junction resolvase RecU (211 aa).

4 residues coordinate Mg(2+): threonine 95, aspartate 97, glutamate 110, and glutamine 129.

The protein belongs to the RecU family. Mg(2+) is required as a cofactor.

Its subcellular location is the cytoplasm. It carries out the reaction Endonucleolytic cleavage at a junction such as a reciprocal single-stranded crossover between two homologous DNA duplexes (Holliday junction).. In terms of biological role, endonuclease that resolves Holliday junction intermediates in genetic recombination. Cleaves mobile four-strand junctions by introducing symmetrical nicks in paired strands. Promotes annealing of linear ssDNA with homologous dsDNA. Required for DNA repair, homologous recombination and chromosome segregation. In Lactobacillus acidophilus (strain ATCC 700396 / NCK56 / N2 / NCFM), this protein is Holliday junction resolvase RecU.